Reading from the N-terminus, the 658-residue chain is ATP-dependent RNA helicase MSS116, mitochondrial (658 aa).

The N-terminal 35 residues, 1-35 (MFRVTGIATARAVALQPFRAPLGVIRRFGISATAS), are a transit peptide targeting the mitochondrion. The segment covering 40 to 79 (HGHDMQSRNGSRWDSRRQGDRRSSRWEGRGSDREDGERGS) has biased composition (basic and acidic residues). The tract at residues 40-104 (HGHDMQSRNG…DGAAREGFSL (65 aa)) is disordered. The short motif at 126–154 (TLVEEGVLSNELYEMLQSRGFDKLTPVQQ) is the Q motif element. Residues 158-343 (KPILQTEHDV…NSIMNHAKCL (186 aa)) form the Helicase ATP-binding domain. 171–178 (AKTGTGKT) is a binding site for ATP. A DEAD box motif is present at residues 284 to 287 (DEAD). Residues 372-528 (NITASLYKIR…TFDAAAQELS (157 aa)) enclose the Helicase C-terminal domain.

The protein belongs to the DEAD box helicase family. DDX18/HAS1 subfamily.

It is found in the mitochondrion matrix. It carries out the reaction ATP + H2O = ADP + phosphate + H(+). ATP-dependent RNA helicase required for mitochondrial splicing of group I and II introns. Also required for efficient mitochondrial translation. The protein is ATP-dependent RNA helicase MSS116, mitochondrial (MSS116) of Eremothecium gossypii (strain ATCC 10895 / CBS 109.51 / FGSC 9923 / NRRL Y-1056) (Yeast).